We begin with the raw amino-acid sequence, 186 residues long: GMP synthase [glutamine-hydrolyzing] subunit A (186 aa).

The region spanning 2–186 (SIVIINNFGQ…ENFNKICENY (185 aa)) is the Glutamine amidotransferase type-1 domain. Catalysis depends on C76, which acts as the Nucleophile. Active-site residues include H163 and E165.

In terms of assembly, heterodimer composed of a glutamine amidotransferase subunit (A) and a GMP-binding subunit (B).

It carries out the reaction XMP + L-glutamine + ATP + H2O = GMP + L-glutamate + AMP + diphosphate + 2 H(+). The protein operates within purine metabolism; GMP biosynthesis; GMP from XMP (L-Gln route): step 1/1. Its function is as follows. Catalyzes the synthesis of GMP from XMP. The sequence is that of GMP synthase [glutamine-hydrolyzing] subunit A from Methanosphaera stadtmanae (strain ATCC 43021 / DSM 3091 / JCM 11832 / MCB-3).